A 30-amino-acid polypeptide reads, in one-letter code: Cyclotide cter-H (30 aa).

A cross-link (cyclopeptide (Gly-Asp)) is located at residues 1 to 30 (GLPCGESCVFIPCITTVVGCSCKNKVCYND). 3 disulfide bridges follow: cysteine 4-cysteine 20, cysteine 8-cysteine 22, and cysteine 13-cysteine 27.

Contains 3 disulfide bonds. In terms of processing, this is a cyclic peptide.

Probably participates in a plant defense mechanism. This is Cyclotide cter-H from Clitoria ternatea (Butterfly pea).